A 492-amino-acid polypeptide reads, in one-letter code: MSNRQSIDDMNLSVKNKKSKSIFSCRPVKYVCLSVAVAAVGYANYMNNGDRNSLSCVDLNNVYSRNLSESQENHNSSFTRTNLVENENEEDDIFGVHRDESFAETVLNGQDIISYLEHQNTKIHEDNIHDDISHTLLNEGDVQNYYDVLNVNEHSDLNELKRNFHNLSLQHYPKITSDNSFELNDEFNQLSEAYQVLSYQIRKNIYDNEGVYGTKKMAIVNPLIYFNGIFTTQLMHEYIGTTEVAQFVQLFLERNIAPENIVSFLEESVSDMMKGQDYRELQLTELLKQKLDLYINDDEKWQNIIKSEINVLTKSPFSKFILEAVGWTYENVGNIYMEQTDNFDNVYHGIYVNLADERINRNYAILDENVNDFVSLLKKFYPFTETVNPYLRRAKHNLNNLQGGINNLYSSVNVVYDNLFNENINISSNEHYHLLQELLKIILNINLCDIEETIRECAYNVLKDKTVDASVHSKRAHRMNILGSLMLESSNE.

A helical membrane pass occupies residues 30–46; it reads YVCLSVAVAAVGYANYM. Positions 144 to 210 constitute a J domain; that stretch reads NYYDVLNVNE…IRKNIYDNEG (67 aa).

It localises to the membrane. This is an uncharacterized protein from Plasmodium falciparum (isolate 3D7).